A 395-amino-acid chain; its full sequence is MASIEAALAEIKRGVEELIPEEELIAKLKENRPLRIKLGADPTAPDIHLGHTVILNKLRTFQDLGHDVTFLIGDFTGMVGDPTGKNTTRPPLTREDVLRNAETYKQQVFKILDPAKTKIQFNSEWLSKLGAEGMIRLASNQTVARMLERDDFKKRYNNGQPIAIHEFMYPLLQGYDSVAMETDVELGGTDQKFNLLMGRELQKANGQKPQVVLMMPLLVGLDGEKKMSKSAHNYIGVSEAPSEMFGKIMSISDDLMWSYYELLSFRPLEEVAQFKAEVANGANPRDIKILLAKEIIARFHSQADADAAEQEFINRFQKGAMPEEMPEFEFESGIAISNLLKEAGLVASTSDALRMIKQGAVKLDGEKLEDAKLIPACGTSVYQVGKRKFARVTIK.

Residues 42–51 (PTAPDIHLGH) carry the 'HIGH' region motif. The short motif at 226 to 230 (KMSKS) is the 'KMSKS' region element. ATP is bound at residue Lys229. The region spanning 334–394 (IAISNLLKEA…GKRKFARVTI (61 aa)) is the S4 RNA-binding domain.

Belongs to the class-I aminoacyl-tRNA synthetase family. TyrS type 2 subfamily. In terms of assembly, homodimer.

It localises to the cytoplasm. It carries out the reaction tRNA(Tyr) + L-tyrosine + ATP = L-tyrosyl-tRNA(Tyr) + AMP + diphosphate + H(+). In terms of biological role, catalyzes the attachment of tyrosine to tRNA(Tyr) in a two-step reaction: tyrosine is first activated by ATP to form Tyr-AMP and then transferred to the acceptor end of tRNA(Tyr). This chain is Tyrosine--tRNA ligase 2, found in Vibrio cholerae serotype O1 (strain ATCC 39315 / El Tor Inaba N16961).